Reading from the N-terminus, the 686-residue chain is Methionine--tRNA ligase (686 aa).

The short motif at 15–25 (PYTNGPIHIGH) is the 'HIGH' region element. Zn(2+) contacts are provided by Cys147, Cys150, Cys160, and Cys163. The short motif at 336-340 (KLSTS) is the 'KMSKS' region element. Position 339 (Thr339) interacts with ATP. The tRNA-binding domain maps to 584-686 (DFAKMDLRVG…AGVGNGEGIN (103 aa)).

The protein belongs to the class-I aminoacyl-tRNA synthetase family. MetG type 1 subfamily. As to quaternary structure, homodimer. It depends on Zn(2+) as a cofactor.

The protein localises to the cytoplasm. The catalysed reaction is tRNA(Met) + L-methionine + ATP = L-methionyl-tRNA(Met) + AMP + diphosphate. Functionally, is required not only for elongation of protein synthesis but also for the initiation of all mRNA translation through initiator tRNA(fMet) aminoacylation. This Flavobacterium psychrophilum (strain ATCC 49511 / DSM 21280 / CIP 103535 / JIP02/86) protein is Methionine--tRNA ligase.